Here is a 313-residue protein sequence, read N- to C-terminus: Protein PALE CRESS, chloroplastic (313 aa).

The N-terminal 22 residues, 1–22 (MAATSLVLTCASPLFSSPRVIS), are a transit peptide targeting the chloroplast.

As to expression, expressed in green tissues, including leaves. Accumulates in chloroplasts of mature stomatal guard cells.

The protein localises to the plastid. Its subcellular location is the chloroplast. It localises to the chromoplast. The protein resides in the etioplast. It is found in the amyloplast. In terms of biological role, required for the differentiation of chloroplast from proplastids or etioplasts, probably by modulating some chloroplast-encoded genes expression and mRNA maturation. Involved in leaf-cells differentiation. The chain is Protein PALE CRESS, chloroplastic (PAC) from Arabidopsis thaliana (Mouse-ear cress).